The primary structure comprises 183 residues: uncharacterized protein (183 aa).

This is an uncharacterized protein from Acanthamoeba polyphaga (Amoeba).